The sequence spans 196 residues: Interleukin-18 (196 aa).

Residues 1 to 29 constitute a propeptide that is removed on maturation; it reads MSCEEIAVCAVRLRENLCLYFEELECDAF.

The protein belongs to the IL-1 family. Forms a ternary complex with ligand-binding receptor subunit IL18R1 and signaling receptor subunit IL18RAP at the plasma membrane. Mature IL18 first binds to IL18R1 forming a low affinity binary complex, which then interacts with IL18RAP to form a high affinity ternary complex that signals inside the cell. Interacts with cargo receptor TMED10; the interaction mediates the translocation from the cytoplasm into the ERGIC (endoplasmic reticulum-Golgi intermediate compartment) and thereby secretion. In terms of processing, the pro-IL-18 precursor is processed by CASP1 or CASP4 to yield the active form.

The protein localises to the cytoplasm. It is found in the secreted. In terms of biological role, augments natural killer cell activity in spleen cells and stimulates interferon gamma production in T-helper type I cells. Involved in transduction of inflammation downstream of pyroptosis: its mature form is specifically released in the extracellular milieu by passing through the gasdermin-D (GSDMD) pore. The chain is Interleukin-18 (IL18) from Gallus gallus (Chicken).